The primary structure comprises 796 residues: Lon protease (796 aa).

Positions 19–213 constitute a Lon N-terminal domain; sequence LPVVVTRGIF…LLKELIINRP (195 aa). An ATP-binding site is contributed by 376–383; that stretch reads GPPGVGKT. The Lon proteolytic domain occupies 612–793; it reads ESQVGVVTGL…EDVYEIIFKN (182 aa). Residues serine 699 and lysine 742 contribute to the active site.

Belongs to the peptidase S16 family. As to quaternary structure, homohexamer. Organized in a ring with a central cavity.

The protein resides in the cytoplasm. The enzyme catalyses Hydrolysis of proteins in presence of ATP.. ATP-dependent serine protease that mediates the selective degradation of mutant and abnormal proteins as well as certain short-lived regulatory proteins. Required for cellular homeostasis and for survival from DNA damage and developmental changes induced by stress. Degrades polypeptides processively to yield small peptide fragments that are 5 to 10 amino acids long. Binds to DNA in a double-stranded, site-specific manner. This chain is Lon protease, found in Mycoplasma mycoides subsp. mycoides SC (strain CCUG 32753 / NCTC 10114 / PG1).